The following is a 361-amino-acid chain: Phenylalanine--tRNA ligase alpha subunit (361 aa).

E260 contributes to the Mg(2+) binding site.

It belongs to the class-II aminoacyl-tRNA synthetase family. Phe-tRNA synthetase alpha subunit type 1 subfamily. As to quaternary structure, tetramer of two alpha and two beta subunits. Mg(2+) is required as a cofactor.

The protein localises to the cytoplasm. The enzyme catalyses tRNA(Phe) + L-phenylalanine + ATP = L-phenylalanyl-tRNA(Phe) + AMP + diphosphate + H(+). The chain is Phenylalanine--tRNA ligase alpha subunit from Bartonella bacilliformis (strain ATCC 35685 / KC583 / Herrer 020/F12,63).